Reading from the N-terminus, the 151-residue chain is 3-hydroxyacyl-[acyl-carrier-protein] dehydratase FabZ (151 aa).

The active site involves His-54.

It belongs to the thioester dehydratase family. FabZ subfamily.

Its subcellular location is the cytoplasm. The enzyme catalyses a (3R)-hydroxyacyl-[ACP] = a (2E)-enoyl-[ACP] + H2O. Involved in unsaturated fatty acids biosynthesis. Catalyzes the dehydration of short chain beta-hydroxyacyl-ACPs and long chain saturated and unsaturated beta-hydroxyacyl-ACPs. The protein is 3-hydroxyacyl-[acyl-carrier-protein] dehydratase FabZ of Cronobacter sakazakii (strain ATCC BAA-894) (Enterobacter sakazakii).